Consider the following 91-residue polypeptide: Signal peptidase complex subunit 1 (91 aa).

Over 1–28 the chain is Cytoplasmic; it reads MEIFNDLSRKLVFPIDYPSQRRVAKLTD. The chain crosses the membrane as a helical span at residues 29-48; it reads IILGSGTLVSCLLGFYAGSL. The Lumenal segment spans residues 49–51; it reads SLT. A helical transmembrane segment spans residues 52–71; sequence LYAFAAAYGLALLLVVPAYG. The Cytoplasmic segment spans residues 72-91; sequence KYRQQKLAWVGSAAATTKDL.

Belongs to the SPCS1 family. As to quaternary structure, component of the signal peptidase complex (SPC) composed of a catalytic subunit SEC11 and three accessory subunits SPC1, SPC2 and SPC3. The complex induces a local thinning of the ER membrane which is used to measure the length of the signal peptide (SP) h-region of protein substrates. This ensures the selectivity of the complex towards h-regions shorter than 18-20 amino acids. SPC associates with the translocon complex.

The protein localises to the endoplasmic reticulum membrane. Functionally, component of the signal peptidase complex (SPC) which catalyzes the cleavage of N-terminal signal sequences from nascent proteins as they are translocated into the lumen of the endoplasmic reticulum. Dispensable for SPC enzymatic activity. The polypeptide is Signal peptidase complex subunit 1 (SPC1) (Eremothecium gossypii (strain ATCC 10895 / CBS 109.51 / FGSC 9923 / NRRL Y-1056) (Yeast)).